We begin with the raw amino-acid sequence, 590 residues long: Multidrug resistance-like ATP-binding protein MdlA (590 aa).

Positions 18 to 303 constitute an ABC transmembrane type-1 domain; sequence YLGAVALLVI…LAWMFNIVER (286 aa). 6 helical membrane passes run 23-43, 53-73, 134-154, 155-175, 248-268, and 280-300; these read ALLVIIAMLQLVPPKVVGIVV, TGQILMWIATMVLIAVVVYLL, GVLTLVDSLVMGCAVLIMMST, QISWQLTLFSLLPMPVMAIMI, IYIAIGMANLLAIGGGSWMVV, and FMMYLGLMIWPMLALAWMFNI. An ABC transporter domain is found at 337–570; the sequence is VNIHQFTYPQ…SGWYRDMYRY (234 aa). 369 to 376 is a binding site for ATP; the sequence is GPTGSGKS.

The protein belongs to the ABC transporter superfamily. Drug exporter-2 (TC 3.A.1.117) family.

Its subcellular location is the cell inner membrane. The enzyme catalyses ATP + H2O + xenobioticSide 1 = ADP + phosphate + xenobioticSide 2.. This Escherichia coli (strain K12) protein is Multidrug resistance-like ATP-binding protein MdlA (mdlA).